The chain runs to 85 residues: Antibacterial factor-related peptide 1 (85 aa).

The first 19 residues, 1-19 (MLYFCLLLVLLLPNNGVSS), serve as a signal peptide directing secretion.

Expressed in the pharynx and body wall muscle.

Its subcellular location is the secreted. The protein is Antibacterial factor-related peptide 1 of Caenorhabditis elegans.